Here is a 1574-residue protein sequence, read N- to C-terminus: Disco-interacting protein 2 homolog B (1574 aa).

Phosphoserine occurs at positions 9, 50, and 53. Residues 12 to 130 enclose the DMAP1-binding domain; sequence AVAALPPEVR…PMPTKRRSTF (119 aa). The interval 31-166 is disordered; sequence LSEGDITQKG…AALSAALQQS (136 aa). Over residues 52 to 62 the composition is skewed to polar residues; the sequence is YSPQTQETDSI. Positions 69–82 are enriched in low complexity; that stretch reads QTPAPTAAQTSAPS. The residue at position 70 (Thr-70) is a Phosphothreonine. Over residues 91–103 the composition is skewed to basic and acidic residues; it reads GARDERYRSDIHT. Ser-99 is subject to Phosphoserine. Thr-139 carries the phosphothreonine modification. Phosphoserine is present on residues Ser-145, Ser-147, and Ser-152. The segment covering 154 to 166 has biased composition (low complexity); the sequence is RRQAALSAALQQS. Phosphoserine is present on residues Ser-177, Ser-192, and Ser-202. Positions 178–200 are disordered; it reads IQGSSTSSSASSTLSHGEVKGTS. Over residues 181–192 the composition is skewed to low complexity; it reads SSTSSSASSTLS. The disordered stretch occupies residues 217 to 244; it reads APPDVTATTSSSSSSLRPANIDLPPSGI. A Phosphoserine modification is found at Ser-256.

The protein belongs to the DIP2 family. In terms of assembly, interacts with alpha-tubulin. Highly expressed in brain and spinal cord (at protein level). In brain, expression is detected in the main olfactory bulb, cortex, lateral ventricle, cornu ammonis 1, cornu ammonis 3, dentate gyrus, striatum, cerebellar cortex and medial habenula. Expressed primarily in neurons including excitatory pyramidal neurons and inhibitory interneurons.

The protein resides in the cell projection. It is found in the dendrite. Its subcellular location is the axon. It localises to the perikaryon. Negatively regulates axonal outgrowth and is essential for normal synaptic transmission. Not required for regulation of axon polarity. Promotes acetylation of alpha-tubulin. The sequence is that of Disco-interacting protein 2 homolog B (Dip2b) from Mus musculus (Mouse).